A 427-amino-acid polypeptide reads, in one-letter code: Enolase (427 aa).

(2R)-2-phosphoglycerate is bound at residue glutamine 163. The active-site Proton donor is glutamate 205. The Mg(2+) site is built by aspartate 242, glutamate 285, and aspartate 312. Lysine 337, arginine 366, serine 367, and lysine 388 together coordinate (2R)-2-phosphoglycerate. The Proton acceptor role is filled by lysine 337.

It belongs to the enolase family. Mg(2+) is required as a cofactor.

The protein localises to the cytoplasm. It localises to the secreted. Its subcellular location is the cell surface. It catalyses the reaction (2R)-2-phosphoglycerate = phosphoenolpyruvate + H2O. It participates in carbohydrate degradation; glycolysis; pyruvate from D-glyceraldehyde 3-phosphate: step 4/5. Functionally, catalyzes the reversible conversion of 2-phosphoglycerate (2-PG) into phosphoenolpyruvate (PEP). It is essential for the degradation of carbohydrates via glycolysis. The chain is Enolase from Ralstonia nicotianae (strain ATCC BAA-1114 / GMI1000) (Ralstonia solanacearum).